An 873-amino-acid chain; its full sequence is Ectonucleotide pyrophosphatase/phosphodiesterase family member 3 (873 aa).

The Cytoplasmic portion of the chain corresponds to 1 to 11 (MESMLTLAMEQ). The helical; Signal-anchor for type II membrane protein transmembrane segment at 12 to 30 (PVKRNTLKKYKIACIVLLA) threads the bilayer. The Extracellular segment spans residues 31–873 (LLVIVSLGLG…TYLPTFETTI (843 aa)). SMB domains are found at residues 51–93 (QGSC…VEST) and 94–138 (RIWM…GETS). Cystine bridges form between cysteine 54–cysteine 71, cysteine 58–cysteine 89, cysteine 69–cysteine 82, cysteine 75–cysteine 81, cysteine 98–cysteine 115, cysteine 103–cysteine 133, cysteine 113–cysteine 126, cysteine 119–cysteine 125, cysteine 144–cysteine 190, and cysteine 152–cysteine 364. The Cell attachment site signature appears at 78-80 (RGD). A phosphodiesterase region spans residues 160 to 544 (PVILFSMDGF…HGSLNHLLKV (385 aa)). A Zn(2+)-binding site is contributed by aspartate 167. Lysine 204 is a binding site for ATP. Threonine 205 contacts Zn(2+). Threonine 205 serves as the catalytic Nucleophile. Asparagine 226 is an ATP binding site. N-linked (GlcNAc...) asparagine glycosylation is present at asparagine 236. Glutamate 275 is a binding site for ATP. A glycan (N-linked (GlcNAc...) asparagine) is linked at asparagine 279. Position 289 (tyrosine 289) interacts with ATP. N-linked (GlcNAc...) asparagine glycosylation occurs at asparagine 290. Zn(2+) contacts are provided by aspartate 325, histidine 329, aspartate 372, and histidine 373. Cystine bridges form between cysteine 380–cysteine 477, cysteine 428–cysteine 816, cysteine 561–cysteine 621, cysteine 573–cysteine 677, cysteine 575–cysteine 662, and cysteine 785–cysteine 795. Residue asparagine 425 is glycosylated (N-linked (GlcNAc...) asparagine). Histidine 482 is a binding site for Zn(2+). 4 N-linked (GlcNAc...) asparagine glycosylation sites follow: asparagine 532, asparagine 592, asparagine 685, and asparagine 697. The interval 580 to 873 (NSIQLEQVNQ…TYLPTFETTI (294 aa)) is nuclease. 5 residues coordinate Ca(2+): aspartate 750, asparagine 752, aspartate 754, histidine 756, and aspartate 758. An N-linked (GlcNAc...) asparagine glycan is attached at asparagine 787.

As to quaternary structure, monomer and homodimer. The cofactor is Zn(2+). N-glycosylated. N-glycosylation is necessary for normal transport to the cell membrane, but is not the apical targeting signal.

Its subcellular location is the cell membrane. It is found in the apical cell membrane. The protein resides in the secreted. It catalyses the reaction a ribonucleoside 5'-triphosphate + H2O = a ribonucleoside 5'-phosphate + diphosphate + H(+). It carries out the reaction ATP + H2O = AMP + diphosphate + H(+). The enzyme catalyses CTP + H2O = CMP + diphosphate + H(+). The catalysed reaction is GTP + H2O = GMP + diphosphate + H(+). It catalyses the reaction UTP + H2O = UMP + diphosphate + H(+). It carries out the reaction UDP-N-acetyl-alpha-D-glucosamine + H2O = N-acetyl-alpha-D-glucosamine 1-phosphate + UMP + 2 H(+). The enzyme catalyses P(1),P(3)-bis(5'-adenosyl) triphosphate + H2O = AMP + ADP + 2 H(+). The catalysed reaction is P(1),P(4)-bis(5'-adenosyl) tetraphosphate + H2O = AMP + ATP + 2 H(+). It catalyses the reaction P(1),P(5)-bis(5'-adenosyl) pentaphosphate + H2O = adenosine 5'-tetraphosphate + AMP + 2 H(+). It carries out the reaction P(1),P(4)-bis(5'-guanosyl) tetraphosphate + H2O = GMP + GTP + 2 H(+). The enzyme catalyses Hydrolytically removes 5'-nucleotides successively from the 3'-hydroxy termini of 3'-hydroxy-terminated oligonucleotides.. Functionally, hydrolase that metabolizes extracellular nucleotides, including ATP, GTP, UTP and CTP. Limits mast cells and basophils response during inflammation and during the chronic phases of allergic responses by eliminating extracellular ATP, a signaling molecule activating these cells in an autocrine manner. Metabolizes extracellular ATP in the lumen of the small intestine, and thereby prevents ATP-induced apoptosis of intestinal plasmacytoid dendritic cells. Has a broad specificity and can also hydrolyze UDP-GlcNAc into UMP and GlcNAc-1-phosphate and potentially several other intracellular nucleotide sugars, including UDP-GalNAc, CMP-NeuAc, GDP-Fuc, and UDP-GlcA. Thereby, could modulate glycan biosynthesis and protein glycosylation. Can hydrolyze extracellular dinucleoside polyphosphates, including the vasoactive adenosine polyphosphates as well. In addition, displays an alkaline phosphodiesterase activity in vitro. The sequence is that of Ectonucleotide pyrophosphatase/phosphodiesterase family member 3 from Pongo abelii (Sumatran orangutan).